Consider the following 627-residue polypeptide: Carene synthase, chloroplastic (627 aa).

Residues 1 to 36 (MSVISILPLASKSCLYKSLMSSTHELKALCRPIATL) constitute a chloroplast transit peptide. Mg(2+) contacts are provided by Asp378, Asp382, and Asp530. The DDXXD motif signature appears at 378-382 (DDMYD).

Belongs to the terpene synthase family. Tpsd subfamily. It depends on Mg(2+) as a cofactor. Mn(2+) serves as cofactor.

It localises to the plastid. The protein resides in the chloroplast. The catalysed reaction is (2E)-geranyl diphosphate = (+)-car-3-ene + diphosphate. It participates in terpene metabolism; oleoresin biosynthesis. Its function is as follows. Terpene synthase (TPS) involved in defensive oleoresin formation in conifers in response to insect attack or other injury. The protein is Carene synthase, chloroplastic (JF67) of Picea abies (Norway spruce).